The chain runs to 573 residues: DNA polymerase lambda (573 aa).

Residues 35-131 enclose the BRCT domain; sequence DARGWLSSLR…KLTDTDGFSL (97 aa). Residues 126-235 are disordered; that stretch reads TDGFSLSSPK…GPDPAPEALG (110 aa). Over residues 127-149 the composition is skewed to polar residues; that stretch reads DGFSLSSPKRSLNEPQPSKSGQD. Residues 263–277 are DNA-binding; that stretch reads KAYNVQGDKWRALGY. Lys310 (schiff-base intermediate with DNA) is an active-site residue. The segment at 343–346 is DNA-binding; it reads GTKT. DCTP contacts are provided by residues Arg384, 415–418, and 424–427; these read SFRR and GDVD. The tract at residues 418 to 427 is involved in primer binding; that stretch reads RGKVTCGDVD. Asp425, Asp427, and Asp488 together coordinate Mn(2+). Positions 464–503 are DNA-binding; that stretch reads ENGQQQKYLGVCRLPGAGQRHRRLDIIVVPYSEFACALLY. A dCTP-binding site is contributed by Asn511.

This sequence belongs to the DNA polymerase type-X family. In terms of assembly, interacts with PCNA. Interacts with PAXX; promoting POLL recruitment to double-strand breaks (DSBs) and stimulation of the end-filling activity of POLL. Interacts with XRCC4; promoting POLL recruitment to double-strand breaks (DSBs) and stimulation of the end-filling activity of POLL. Interacts with NHEJ1/XLF; promoting POLL recruitment to double-strand breaks (DSBs) and stimulation of the end-filling activity of POLL. Mn(2+) is required as a cofactor.

It is found in the nucleus. It carries out the reaction DNA(n) + a 2'-deoxyribonucleoside 5'-triphosphate = DNA(n+1) + diphosphate. Its function is as follows. DNA polymerase that functions in several pathways of DNA repair. Involved in base excision repair (BER) responsible for repair of lesions that give rise to abasic (AP) sites in DNA. Also contributes to DNA double-strand break repair by non-homologous end joining and homologous recombination. Has both template-dependent and template-independent (terminal transferase) DNA polymerase activities. Also has a 5'-deoxyribose-5-phosphate lyase (dRP lyase) activity. The chain is DNA polymerase lambda from Rattus norvegicus (Rat).